A 1321-amino-acid polypeptide reads, in one-letter code: Bile salt export pump (1321 aa).

The Cytoplasmic segment spans residues 1 to 62; sequence MSDSVILRSV…FSSSKDNWLM (62 aa). The ABC transmembrane type-1 1 domain occupies 62-385; that stretch reads MFMGSVCALL…ASSCLEIFST (324 aa). Residues 63–83 traverse the membrane as a helical segment; it reads FMGSVCALLHGMAQPGMIIVF. Residues 84-147 lie on the Extracellular side of the membrane; the sequence is GILTDIFVEY…VIKFSGIYAG (64 aa). 4 N-linked (GlcNAc...) asparagine glycosylation sites follow: asparagine 109, asparagine 116, asparagine 122, and asparagine 125. A helical transmembrane segment spans residues 148 to 168; it reads VGVAVLILGYFQIRLWVITGA. Over 169–215 the chain is Cytoplasmic; it reads RQIRKMRKFYFRRIMRMEIGWFDCTSVGELNSRFSDDINKIDEAIAD. The chain crosses the membrane as a helical span at residues 216-236; that stretch reads QMALFLQRLSTALSGLLLGFY. The Extracellular segment spans residues 237–240; the sequence is RGWK. The chain crosses the membrane as a helical span at residues 241-261; the sequence is LTLVILAVSPLIGIGAAVIGL. Topologically, residues 262-319 are cytoplasmic; that stretch reads SVAKFTELELKAYAKAGSIADEVLSSIRTVAAFGGENKEVERYEKNLMFAQRWGIWKG. Residues 320-340 form a helical membrane-spanning segment; it reads MVMGFFTGYMWCLIFFCYALA. Topologically, residues 341–353 are extracellular; the sequence is FWYGSRLVLDEGE. A helical membrane pass occupies residues 354 to 374; it reads YTPGTLIQIFLCVIIAAMNIG. The Cytoplasmic portion of the chain corresponds to 375–755; it reads NASSCLEIFS…KYNISEWPYI (381 aa). The ABC transporter 1 domain occupies 420-656; it reads IEFHNVTFHY…KGVYFMLVTL (237 aa). Residue 455-462 participates in ATP binding; that stretch reads GSSGAGKS. Phosphothreonine is present on threonine 586. Serine 587 carries the post-translational modification Phosphoserine. The tract at residues 651-674 is interaction with HAX1; it reads FMLVTLQSQEDNTHKETGIKGKDT. A compositionally biased stretch (basic and acidic residues) spans 662–684; that stretch reads NTHKETGIKGKDTTEGDTPERTF. The tract at residues 662 to 722 is disordered; sequence NTHKETGIKG…PLAIGDHKSS (61 aa). Phosphoserine is present on residues serine 692, serine 703, and serine 706. The 289-residue stretch at 755–1043 folds into the ABC transmembrane type-1 2 domain; the sequence is ILVGALCAAI…TFSYTPSYAK (289 aa). The chain crosses the membrane as a helical span at residues 756–776; it reads LVGALCAAINGAVTPIYSLLF. The Extracellular portion of the chain corresponds to 777–794; sequence SQILKTFSLVDKEQQRSE. Residues 795-815 traverse the membrane as a helical segment; sequence IYSMCLFFVILGCVSLFTQFL. Residues 816 to 869 lie on the Cytoplasmic side of the membrane; that stretch reads QGYNFAKSGELLTKRLRKFGFKAMLRQDIGWFDDLKNNPGVLTTRLATDASQVQ. A run of 2 helical transmembrane segments spans residues 870-890 and 891-911; these read GATGSQVGMMVNSFTNIFVAV and LIAFLFNWKLSLVISVFFPFL. Residues 912-979 lie on the Cytoplasmic side of the membrane; it reads ALSGAVQTKM…SYKTAIRKAN (68 aa). A helical transmembrane segment spans residues 980–1000; sequence VYGLCYAFSQGISFLANSAAY. Over 1001–1011 the chain is Extracellular; it reads RYGGYLIVYED. The chain crosses the membrane as a helical span at residues 1012 to 1032; sequence LNFSYVFRVVSSIAMSATAVG. The Cytoplasmic segment spans residues 1033 to 1321; it reads RTFSYTPSYA…KLVITGAPIS (289 aa). Positions 1078-1316 constitute an ABC transporter 2 domain; that stretch reads IDFIDCKFTY…KGAYYKLVIT (239 aa). An ATP-binding site is contributed by 1113–1120; sequence GSSGCGKS. Serine 1321 bears the Phosphoserine mark.

It belongs to the ABC transporter superfamily. ABCB family. Multidrug resistance exporter (TC 3.A.1.201) subfamily. As to quaternary structure, interacts with HAX1. Interacts with the adapter protein complex 2 (AP-2) throught AP2A2 or AP2A1; this interaction regulates cell membrane expression of ABCB11 through its internalization in a clathrin-dependent manner and its subsequent degradation. In terms of processing, N-glycosylated. Post-translationally, ubiquitinated; short-chain ubiquitination regulates cell-Surface expression of ABCB11. Expressed predominantly, if not exclusively in the liver, where it was further localized to the canalicular microvilli and to subcanalicular vesicles of the hepatocytes by in situ.

Its subcellular location is the apical cell membrane. The protein resides in the recycling endosome membrane. The protein localises to the endosome. It is found in the cell membrane. It catalyses the reaction cholate(in) + ATP + H2O = cholate(out) + ADP + phosphate + H(+). The enzyme catalyses taurocholate(in) + ATP + H2O = taurocholate(out) + ADP + phosphate + H(+). The catalysed reaction is glycocholate(in) + ATP + H2O = glycocholate(out) + ADP + phosphate + H(+). It carries out the reaction glycochenodeoxycholate(in) + ATP + H2O = glycochenodeoxycholate(out) + ADP + phosphate + H(+). It catalyses the reaction taurochenodeoxycholate(in) + ATP + H2O = taurochenodeoxycholate(out) + ADP + phosphate + H(+). The enzyme catalyses glycoursodeoxycholate(in) + ATP + H2O = glycoursodeoxycholate(out) + ADP + phosphate + H(+). The catalysed reaction is tauroursodeoxycholate(in) + ATP + H2O = tauroursodeoxycholate(out) + ADP + phosphate + H(+). It carries out the reaction taurodeoxycholate(in) + ATP + H2O = taurodeoxycholate(out) + ADP + phosphate + H(+). It catalyses the reaction taurolithocholate 3-sulfate(in) + ATP + H2O = taurolithocholate 3-sulfate(out) + ADP + phosphate + H(+). The enzyme catalyses pravastatin(in) + ATP + H2O = pravastatin(out) + ADP + phosphate + H(+). Its activity is regulated as follows. The uptake of taurocholate is inhibited by taurolithocholate sulfate with an IC(50) of 9 uM. Pravastatin competitively inhibits the transport of taurocholic acid. Cyclosporin A, glibenclamide, rifampicin and troglitazonestrongly competitively inhibit the transport activity of taurocholate. The canalicular transport activity of taurocholate is strongly dependent on canalicular membrane cholesterol content. The uptake of taurocholate is increased by short- and medium-chain fatty acids. Cholesterol increases transport capacity of taurocholate without affecting the affinity for the substrate. Its function is as follows. Catalyzes the transport of the major hydrophobic bile salts, such as taurine and glycine-conjugated cholic acid across the canalicular membrane of hepatocytes in an ATP-dependent manner, therefore participates in hepatic bile acid homeostasis and consequently to lipid homeostasis through regulation of biliary lipid secretion in a bile salts dependent manner. Transports taurine-conjugated bile salts more rapidly than glycine-conjugated bile salts. Also transports non-bile acid compounds, such as pravastatin and fexofenadine in an ATP-dependent manner and may be involved in their biliary excretion. The chain is Bile salt export pump from Mus musculus (Mouse).